A 94-amino-acid polypeptide reads, in one-letter code: Scorpine-like-1 (94 aa).

Residues 1 to 18 form the signal peptide; the sequence is MNTKFTVLIFLGVIVVSY. Residues 54–94 enclose the BetaSPN-type CS-alpha/beta domain; it reads EYGCMMDISWNKDCQRHCQSTEQKDGICHGMKCKCGKPRSY. 3 cysteine pairs are disulfide-bonded: cysteine 57-cysteine 81, cysteine 67-cysteine 86, and cysteine 71-cysteine 88.

This sequence belongs to the long chain scorpion toxin family. Class 3 subfamily. In terms of tissue distribution, expressed by the venom gland.

It localises to the secreted. Has antibacterial activity. The protein is Scorpine-like-1 of Urodacus yaschenkoi (Inland robust scorpion).